Reading from the N-terminus, the 314-residue chain is Putative SET domain-containing protein L222 (314 aa).

The SET domain occupies 23–172 (EYIQVIYQNP…ANTEITISYG (150 aa)).

Belongs to the class V-like SAM-binding methyltransferase superfamily.

This chain is Putative SET domain-containing protein L222, found in Acanthamoeba polyphaga mimivirus (APMV).